The sequence spans 252 residues: 2-succinyl-6-hydroxy-2,4-cyclohexadiene-1-carboxylate synthase (252 aa).

This sequence belongs to the AB hydrolase superfamily. MenH family. Monomer.

The enzyme catalyses 5-enolpyruvoyl-6-hydroxy-2-succinyl-cyclohex-3-ene-1-carboxylate = (1R,6R)-6-hydroxy-2-succinyl-cyclohexa-2,4-diene-1-carboxylate + pyruvate. The protein operates within quinol/quinone metabolism; 1,4-dihydroxy-2-naphthoate biosynthesis; 1,4-dihydroxy-2-naphthoate from chorismate: step 3/7. It functions in the pathway quinol/quinone metabolism; menaquinone biosynthesis. In terms of biological role, catalyzes a proton abstraction reaction that results in 2,5-elimination of pyruvate from 2-succinyl-5-enolpyruvyl-6-hydroxy-3-cyclohexene-1-carboxylate (SEPHCHC) and the formation of 2-succinyl-6-hydroxy-2,4-cyclohexadiene-1-carboxylate (SHCHC). In Salmonella newport (strain SL254), this protein is 2-succinyl-6-hydroxy-2,4-cyclohexadiene-1-carboxylate synthase.